The primary structure comprises 225 residues: DNA repair protein RecO (225 aa).

It belongs to the RecO family.

Its function is as follows. Involved in DNA repair and RecF pathway recombination. This is DNA repair protein RecO from Clostridium perfringens (strain ATCC 13124 / DSM 756 / JCM 1290 / NCIMB 6125 / NCTC 8237 / Type A).